The following is a 406-amino-acid chain: COP9 signalosome complex subunit 4 (406 aa).

At A2 the chain carries N-acetylalanine. Residue K25 is modified to N6-acetyllysine. Positions Y197 to A366 constitute a PCI domain.

The protein belongs to the CSN4 family. As to quaternary structure, component of the CSN complex, composed of COPS1/GPS1, COPS2, COPS3, COPS4, COPS5, COPS6, COPS7 (COPS7A or COPS7B), COPS8 and COPS9 isoform 1. In the complex, it probably interacts directly with COPS1, COPS2, COPS3, COPS5, COPS6, COPS7 (COPS7A or COPS7B) and COPS8. Interacts with TOR1A; the interaction is direct and associates TOR1A and SNAPIN with the CSN complex. Interacts with STON2; controls STON2 neddylation levels. Interacts with ERCC6.

Its subcellular location is the cytoplasm. It localises to the nucleus. The protein resides in the cytoplasmic vesicle. The protein localises to the secretory vesicle. It is found in the synaptic vesicle. Functionally, component of the COP9 signalosome complex (CSN), a complex involved in various cellular and developmental processes. The CSN complex is an essential regulator of the ubiquitin (Ubl) conjugation pathway by mediating the deneddylation of the cullin subunits of SCF-type E3 ligase complexes, leading to decrease the Ubl ligase activity of SCF-type complexes such as SCF, CSA or DDB2. Also involved in the deneddylation of non-cullin subunits such as STON2. The complex is also involved in phosphorylation of p53/TP53, c-jun/JUN, IkappaBalpha/NFKBIA, ITPK1, IRF8/ICSBP and SNAPIN, possibly via its association with CK2 and PKD kinases. CSN-dependent phosphorylation of TP53 and JUN promotes and protects degradation by the Ubl system, respectively. This chain is COP9 signalosome complex subunit 4 (COPS4), found in Homo sapiens (Human).